We begin with the raw amino-acid sequence, 129 residues long: Small ribosomal subunit protein uS11 (129 aa).

The protein belongs to the universal ribosomal protein uS11 family. In terms of assembly, part of the 30S ribosomal subunit. Interacts with proteins S7 and S18. Binds to IF-3.

Its function is as follows. Located on the platform of the 30S subunit, it bridges several disparate RNA helices of the 16S rRNA. Forms part of the Shine-Dalgarno cleft in the 70S ribosome. The chain is Small ribosomal subunit protein uS11 from Aromatoleum aromaticum (strain DSM 19018 / LMG 30748 / EbN1) (Azoarcus sp. (strain EbN1)).